We begin with the raw amino-acid sequence, 152 residues long: Mediator of RNA polymerase II transcription subunit 9 (152 aa).

Residues 98–150 are a coiled coil; sequence IKRCKALLQENEEVRNLLANSIEEWENIIADKEQQLRVKAKVLRDLDARIEKI.

This sequence belongs to the Mediator complex subunit 9 family. In terms of assembly, component of the Mediator complex.

The protein localises to the nucleus. In terms of biological role, component of the Mediator complex, a coactivator involved in the regulated transcription of nearly all RNA polymerase II-dependent genes. Mediator functions as a bridge to convey information from gene-specific regulatory proteins to the basal RNA polymerase II transcription machinery. Mediator is recruited to promoters by direct interactions with regulatory proteins and serves as a scaffold for the assembly of a functional preinitiation complex with RNA polymerase II and the general transcription factors. This chain is Mediator of RNA polymerase II transcription subunit 9 (CSE2), found in Candida glabrata (strain ATCC 2001 / BCRC 20586 / JCM 3761 / NBRC 0622 / NRRL Y-65 / CBS 138) (Yeast).